A 251-amino-acid chain; its full sequence is Phosphate import ATP-binding protein PstB 2 (251 aa).

Positions 5 to 246 constitute an ABC transporter domain; it reads LTTENLSLFY…PVKQETNDYI (242 aa). Residue 37–44 coordinates ATP; it reads GPSGCGKS.

It belongs to the ABC transporter superfamily. Phosphate importer (TC 3.A.1.7) family. The complex is composed of two ATP-binding proteins (PstB), two transmembrane proteins (PstC and PstA) and a solute-binding protein (PstS).

Its subcellular location is the cell membrane. The enzyme catalyses phosphate(out) + ATP + H2O = ADP + 2 phosphate(in) + H(+). Functionally, part of the ABC transporter complex PstSACB involved in phosphate import. Responsible for energy coupling to the transport system. This chain is Phosphate import ATP-binding protein PstB 2, found in Lactiplantibacillus plantarum (strain ATCC BAA-793 / NCIMB 8826 / WCFS1) (Lactobacillus plantarum).